We begin with the raw amino-acid sequence, 149 residues long: Large ribosomal subunit protein uL15 (149 aa).

A disordered region spans residues 14 to 57 (KQRKRVGRGSGSGWGCTSGKGNKGQNARSGGGVRPGFEGGQMPL). Composition is skewed to gly residues over residues 21–35 (RGSGSGWGCTSGKGN) and 42–52 (SGGGVRPGFEG).

It belongs to the universal ribosomal protein uL15 family. Part of the 50S ribosomal subunit.

Binds to the 23S rRNA. In Oleidesulfovibrio alaskensis (strain ATCC BAA-1058 / DSM 17464 / G20) (Desulfovibrio alaskensis), this protein is Large ribosomal subunit protein uL15.